Reading from the N-terminus, the 306-residue chain is Non-specific ribonucleoside hydrolase RihC (306 aa).

His-235 is an active-site residue.

It belongs to the IUNH family. RihC subfamily.

In terms of biological role, hydrolyzes both purine and pyrimidine ribonucleosides with a broad-substrate specificity. This is Non-specific ribonucleoside hydrolase RihC from Salmonella paratyphi C (strain RKS4594).